The following is a 1941-amino-acid chain: Myosin-7B (1941 aa).

The region spanning 30–80 (DGKKRVWVPDEQDAYVEAEVKTEATGGKVTVETKDQKVLTVRETEMQPMNP) is the Myosin N-terminal SH3-like domain. Residues 84–785 (DLLEDMAMMT…LLGILEELRD (702 aa)) form the Myosin motor domain. Position 177-184 (177-184 (GESGAGKT)) interacts with ATP. Actin-binding stretches follow at residues 662–684 (LNKL…VPNE) and 764–778 (QFGH…GLLG). An IQ domain is found at 788–817 (LAKVLTLLQARSRGRLMRLEYQRMLGGRDA). Residues 846-1935 (LLRSAQAEEE…KLRARSRDAL (1090 aa)) adopt a coiled-coil conformation. The tract at residues 1887 to 1941 (RQFEEAEQQASTNLAKYRKAQHELDDAEERADMAETQANKLRARSRDALGPKHKE) is disordered. Basic and acidic residues predominate over residues 1930-1941 (RSRDALGPKHKE).

It belongs to the TRAFAC class myosin-kinesin ATPase superfamily. Myosin family. Muscle myosin is a hexameric protein that consists of 2 heavy chain subunits (MHC), 2 alkali light chain subunits (MLC) and 2 regulatory light chain subunits (MLC-2).

It localises to the membrane. Involved in muscle contraction. The protein is Myosin-7B (Myh7b) of Mus musculus (Mouse).